The primary structure comprises 475 residues: ATP synthase subunit beta, chloroplastic (475 aa).

156–163 (GGAGVGKT) lines the ATP pocket.

It belongs to the ATPase alpha/beta chains family. F-type ATPases have 2 components, CF(1) - the catalytic core - and CF(0) - the membrane proton channel. CF(1) has five subunits: alpha(3), beta(3), gamma(1), delta(1), epsilon(1). CF(0) has four main subunits: a(1), b(1), b'(1) and c(9-12).

It is found in the plastid. The protein resides in the chloroplast thylakoid membrane. The catalysed reaction is ATP + H2O + 4 H(+)(in) = ADP + phosphate + 5 H(+)(out). Its function is as follows. Produces ATP from ADP in the presence of a proton gradient across the membrane. The catalytic sites are hosted primarily by the beta subunits. The protein is ATP synthase subunit beta, chloroplastic of Gracilaria tenuistipitata var. liui (Red alga).